The sequence spans 391 residues: Metal tolerance protein 7 (391 aa).

Residues 1-21 are disordered; sequence MGSRGRRGGGERETETEEDET. The Cytoplasmic portion of the chain corresponds to 1 to 103; the sequence is MGSRGRRGGG…LRQMAKGERL (103 aa). A helical transmembrane segment spans residues 104-124; the sequence is AINLSNIINLILFIGKVLASV. Residues 125–134 lie on the Vacuolar side of the membrane; that stretch reads ESLSMAVIAS. A helical transmembrane segment spans residues 135-155; that stretch reads TLDSLLDLLSGFILWFTAHAM. At 156 to 171 the chain is on the cytoplasmic side; it reads KKPNKYSYPIGKRRMQ. A helical membrane pass occupies residues 172 to 192; that stretch reads PVGIIVFASVMGTLGFQVLIE. At 193-210 the chain is on the vacuolar side; it reads SGRQLITNEHQVFDHRKE. A helical transmembrane segment spans residues 211-231; sequence LWMIGSMSSVAVVKFFLMLYC. The Cytoplasmic segment spans residues 232–246; the sequence is RSFKNEIVRAYAQDH. A helical transmembrane segment spans residues 247–264; the sequence is FFDVITNSVGLVSALLAV. Residues 265–266 are Vacuolar-facing; that stretch reads RY. The helical transmembrane segment at 267–287 threads the bilayer; that stretch reads KWWMDPVGAILIAVYTITTWA. At 288-391 the chain is on the cytoplasmic side; that stretch reads RTVVENVGTL…THRPEHKAEV (104 aa).

This sequence belongs to the cation diffusion facilitator (CDF) transporter (TC 2.A.4) family. SLC30A subfamily.

The protein localises to the vacuole membrane. Involved in sequestration of excess metal in the cytoplasm into vacuoles to maintain metal homeostasis. In Oryza sativa subsp. japonica (Rice), this protein is Metal tolerance protein 7 (MTP7).